We begin with the raw amino-acid sequence, 176 residues long: Ribosome rescue factor SmrB (176 aa).

One can recognise a Smr domain in the interval 98 to 173; sequence LDVHGLNQDQ…RSTAILFLIH (76 aa).

It belongs to the SmrB family. In terms of assembly, associates with collided ribosomes, but not with correctly translating polysomes.

In terms of biological role, acts as a ribosome collision sensor. Detects stalled/collided disomes (pairs of ribosomes where the leading ribosome is stalled and a second ribosome has collided with it) and endonucleolytically cleaves mRNA at the 5' boundary of the stalled ribosome. Stalled/collided disomes form a new interface (primarily via the 30S subunits) that binds SmrB. Cleaved mRNA becomes available for tmRNA ligation, leading to ribosomal subunit dissociation and rescue of stalled ribosomes. This chain is Ribosome rescue factor SmrB, found in Buchnera aphidicola subsp. Baizongia pistaciae (strain Bp).